A 324-amino-acid chain; its full sequence is Beta-ketoacyl-[acyl-carrier-protein] synthase III (324 aa).

Residues Cys-111 and His-251 contribute to the active site. The tract at residues 252-256 is ACP-binding; it reads QANTR. Residue Asn-281 is part of the active site.

It belongs to the thiolase-like superfamily. FabH family. In terms of assembly, homodimer.

It localises to the plastid. Its subcellular location is the chloroplast. The catalysed reaction is malonyl-[ACP] + acetyl-CoA + H(+) = 3-oxobutanoyl-[ACP] + CO2 + CoA. It participates in lipid metabolism; fatty acid biosynthesis. Functionally, catalyzes the condensation reaction of fatty acid synthesis by the addition to an acyl acceptor of two carbons from malonyl-ACP. Catalyzes the first condensation reaction which initiates fatty acid synthesis and may therefore play a role in governing the total rate of fatty acid production. Possesses both acetoacetyl-ACP synthase and acetyl transacylase activities. Its substrate specificity determines the biosynthesis of branched-chain and/or straight-chain of fatty acids. This is Beta-ketoacyl-[acyl-carrier-protein] synthase III from Pyropia yezoensis (Susabi-nori).